The following is a 350-amino-acid chain: dTDP-D-glucose 4,6-dehydratase (350 aa).

Thr142 provides a ligand contact to substrate. Asp143 (proton donor) is an active-site residue. Catalysis depends on proton acceptor residues Glu144 and Tyr166.

It belongs to the NAD(P)-dependent epimerase/dehydratase family. dTDP-glucose dehydratase subfamily. Requires NAD(+) as cofactor.

The catalysed reaction is dTDP-alpha-D-glucose = dTDP-4-dehydro-6-deoxy-alpha-D-glucose + H2O. This chain is dTDP-D-glucose 4,6-dehydratase (TGDS), found in Homo sapiens (Human).